The primary structure comprises 466 residues: Cysteine--tRNA ligase (466 aa).

Position 29 (Cys-29) interacts with Zn(2+). A 'HIGH' region motif is present at residues 31–41; that stretch reads PTVYNYIHIGN. The Zn(2+) site is built by Cys-209, His-234, and Glu-238. A 'KMSKS' region motif is present at residues 266-270; it reads KMSKS. Position 269 (Lys-269) interacts with ATP. Position 270 is a phosphoserine (Ser-270).

This sequence belongs to the class-I aminoacyl-tRNA synthetase family. In terms of assembly, monomer. The cofactor is Zn(2+).

Its subcellular location is the cytoplasm. It catalyses the reaction tRNA(Cys) + L-cysteine + ATP = L-cysteinyl-tRNA(Cys) + AMP + diphosphate. This Bacillus velezensis (strain DSM 23117 / BGSC 10A6 / LMG 26770 / FZB42) (Bacillus amyloliquefaciens subsp. plantarum) protein is Cysteine--tRNA ligase.